The sequence spans 276 residues: Undecaprenyl-diphosphatase 2 (276 aa).

8 helical membrane-spanning segments follow: residues 1–21, 44–64, 87–107, 114–134, 150–170, 190–210, 222–242, and 251–271; these read MSLW…LFPV, QLLP…LWYF, GHLM…GLLL, VFHD…LLWL, MTFK…IPGF, AAEF…VLEL, DALL…RFLM, and LASF…WFML.

It belongs to the UppP family.

The protein localises to the cell inner membrane. It carries out the reaction di-trans,octa-cis-undecaprenyl diphosphate + H2O = di-trans,octa-cis-undecaprenyl phosphate + phosphate + H(+). Functionally, catalyzes the dephosphorylation of undecaprenyl diphosphate (UPP). Confers resistance to bacitracin. This chain is Undecaprenyl-diphosphatase 2, found in Burkholderia lata (strain ATCC 17760 / DSM 23089 / LMG 22485 / NCIMB 9086 / R18194 / 383).